A 219-amino-acid polypeptide reads, in one-letter code: Protein-L-isoaspartate O-methyltransferase (219 aa).

Residue Ser-60 is part of the active site.

The protein belongs to the methyltransferase superfamily. L-isoaspartyl/D-aspartyl protein methyltransferase family.

The protein localises to the cytoplasm. The enzyme catalyses [protein]-L-isoaspartate + S-adenosyl-L-methionine = [protein]-L-isoaspartate alpha-methyl ester + S-adenosyl-L-homocysteine. Its function is as follows. Catalyzes the methyl esterification of L-isoaspartyl residues in peptides and proteins that result from spontaneous decomposition of normal L-aspartyl and L-asparaginyl residues. It plays a role in the repair and/or degradation of damaged proteins. The polypeptide is Protein-L-isoaspartate O-methyltransferase (Rhodospirillum rubrum (strain ATCC 11170 / ATH 1.1.1 / DSM 467 / LMG 4362 / NCIMB 8255 / S1)).